The sequence spans 113 residues: UPF0102 protein Dgeo_1894 (113 aa).

This sequence belongs to the UPF0102 family.

The sequence is that of UPF0102 protein Dgeo_1894 from Deinococcus geothermalis (strain DSM 11300 / CIP 105573 / AG-3a).